A 271-amino-acid chain; its full sequence is Glutamate 5-kinase (271 aa).

Lysine 14 provides a ligand contact to ATP. Residues serine 54, aspartate 141, and asparagine 157 each coordinate substrate. ATP-binding positions include 177–178 and 219–225; these read SD and TGGMSSK.

This sequence belongs to the glutamate 5-kinase family.

Its subcellular location is the cytoplasm. It catalyses the reaction L-glutamate + ATP = L-glutamyl 5-phosphate + ADP. It participates in amino-acid biosynthesis; L-proline biosynthesis; L-glutamate 5-semialdehyde from L-glutamate: step 1/2. In terms of biological role, catalyzes the transfer of a phosphate group to glutamate to form L-glutamate 5-phosphate. This Enterococcus faecalis (strain ATCC 700802 / V583) protein is Glutamate 5-kinase.